The chain runs to 372 residues: Heat shock 70 kDa protein II (372 aa).

This sequence belongs to the heat shock protein 70 family.

The polypeptide is Heat shock 70 kDa protein II (HSP70II) (Paracentrotus lividus (Common sea urchin)).